Consider the following 3210-residue polypeptide: PF 1022-synthetase (3210 aa).

A condensation 1 region spans residues 68-454 (VDDRRHAIGH…VKELDVVTAE (387 aa)). Positions 483-876 (AGDPNKAAVF…GRKDSQVKIR (394 aa)) are adenylation 1. The 77-residue stretch at 1010–1086 (APATGIEVKL…GLVDVIGRDP (77 aa)) folds into the Carrier 1 domain. S1047 is modified (O-(pantetheine 4'-phosphoryl)serine). The segment at 1104-1534 (SFAQGRLWFL…RTPIAVLPLT (431 aa)) is condensation 2. An adenylation 2 region spans residues 1563–2023 (FRKQVAAHPH…GRMDQQVKIR (461 aa)). The tract at residues 2081–2236 (EGWKDFFESN…YLLEVVESLV (156 aa)) is S-adenosyl-L-methionine-dependent N-methyltransferase. Carrier domains lie at 2570–2644 (DPFV…RQGL) and 2668–2742 (TPSD…RLTQ). Residues S2604 and S2702 each carry the O-(pantetheine 4'-phosphoryl)serine modification. The condensation 3 stretch occupies residues 2788–3203 (LDVYPATQMQ…KRMLEELCGN (416 aa)). The tract at residues 2976–3002 (VIKGNNNTTPPPPPQQQSTPSGAHHAS) is disordered.

This sequence belongs to the NRP synthetase family. The cofactor is pantetheine 4'-phosphate.

The enzyme catalyses 2 (R)-3-phenyllactate + 2 (R)-lactate + 4 L-leucine + 4 S-adenosyl-L-methionine + 8 ATP = PF1022A + 8 AMP + 4 S-adenosyl-L-homocysteine + 8 diphosphate + 8 H(+). The catalysed reaction is 4 (R)-3-phenyllactate + 4 L-leucine + 4 S-adenosyl-L-methionine + 8 ATP = PF1022B + 8 AMP + 4 S-adenosyl-L-homocysteine + 8 diphosphate + 8 H(+). It carries out the reaction 3 (R)-3-phenyllactate + (R)-lactate + 4 L-leucine + 4 S-adenosyl-L-methionine + 8 ATP = PF1022C + 8 AMP + 4 S-adenosyl-L-homocysteine + 8 diphosphate + 8 H(+). It catalyses the reaction (R)-3-phenyllactate + 3 (R)-lactate + 4 L-leucine + 4 S-adenosyl-L-methionine + 8 ATP = PF1022D + 8 AMP + 4 S-adenosyl-L-homocysteine + 8 diphosphate + 8 H(+). The enzyme catalyses 4 (R)-lactate + 4 L-leucine + 4 S-adenosyl-L-methionine + 8 ATP = PF1022F + 8 AMP + 4 S-adenosyl-L-homocysteine + 8 diphosphate + 8 H(+). Its function is as follows. Nonribosomal peptide synthetase that synthesizes cyclooctadepsipeptides (CODPs) PF 1022 that show powerful broad-spectrum anthelmintic activity with low toxicity in animals. Couples 4 N-methyl-L-leucines and a varying content of alpha-D-hydroxy acids (D-lactates or D-phenyllactates) in an alternative fashion. The enzyme is capable of synthesizing all known natural cyclooctadepsipeptides of the PF1022 type differing in the content of D-lactate and D-phenyllactate, using from 4 D-lactates (PF 1022F) to 4 D-phenyllactates (PF 1022B), respectively. The formation of different PF-related compounds is mainly controlled by the molar ratio of the hydroxy acids. N-methylation of the substrate L-leucine takes place after covalent binding prior to peptide bond formation. The chain is PF 1022-synthetase from Rosellinia sp. (Mycelia sterilia).